Reading from the N-terminus, the 63-residue chain is Large ribosomal subunit protein uL30 (63 aa).

Belongs to the universal ribosomal protein uL30 family. Part of the 50S ribosomal subunit.

The protein is Large ribosomal subunit protein uL30 of Natranaerobius thermophilus (strain ATCC BAA-1301 / DSM 18059 / JW/NM-WN-LF).